A 752-amino-acid chain; its full sequence is DNA helicase/primase complex-associated protein (752 aa).

Belongs to the herpesviridae HEPA family. In terms of assembly, associates with the primase and the helicase to form the helicase-primase complex. Interacts with the origin-binding protein. Interacts with the polymerase catalytic subunit.

It is found in the host nucleus. Component of the helicase/primase complex. Unwinds the DNA at the replication forks and generates single-stranded DNA for both leading and lagging strand synthesis. The primase synthesizes short RNA primers on the lagging strand that the polymerase presumably elongates using dNTPs. The primase-associated factor has no known catalytic activity in the complex and may serve to facilitate the formation of the replisome by directly interacting with the origin-binding protein and the polymerase. This Homo sapiens (Human) protein is DNA helicase/primase complex-associated protein.